A 101-amino-acid chain; its full sequence is NAD(P)H-quinone oxidoreductase subunit 4L, chloroplastic (101 aa).

3 helical membrane-spanning segments follow: residues 2–22 (MLEH…YGLI), 32–52 (MCLE…SDLF), and 61–81 (VFSI…PAIV).

This sequence belongs to the complex I subunit 4L family. In terms of assembly, NDH is composed of at least 16 different subunits, 5 of which are encoded in the nucleus.

The protein resides in the plastid. It is found in the chloroplast thylakoid membrane. It carries out the reaction a plastoquinone + NADH + (n+1) H(+)(in) = a plastoquinol + NAD(+) + n H(+)(out). The catalysed reaction is a plastoquinone + NADPH + (n+1) H(+)(in) = a plastoquinol + NADP(+) + n H(+)(out). Its function is as follows. NDH shuttles electrons from NAD(P)H:plastoquinone, via FMN and iron-sulfur (Fe-S) centers, to quinones in the photosynthetic chain and possibly in a chloroplast respiratory chain. The immediate electron acceptor for the enzyme in this species is believed to be plastoquinone. Couples the redox reaction to proton translocation, and thus conserves the redox energy in a proton gradient. This Nuphar advena (Common spatterdock) protein is NAD(P)H-quinone oxidoreductase subunit 4L, chloroplastic.